A 407-amino-acid polypeptide reads, in one-letter code: Methylthioribose-1-phosphate isomerase (407 aa).

Aspartate 275 functions as the Proton donor in the catalytic mechanism.

The protein belongs to the eIF-2B alpha/beta/delta subunits family. MtnA subfamily.

It localises to the cytoplasm. The protein localises to the nucleus. The enzyme catalyses 5-(methylsulfanyl)-alpha-D-ribose 1-phosphate = 5-(methylsulfanyl)-D-ribulose 1-phosphate. Its pathway is amino-acid biosynthesis; L-methionine biosynthesis via salvage pathway; L-methionine from S-methyl-5-thio-alpha-D-ribose 1-phosphate: step 1/6. Its function is as follows. Catalyzes the interconversion of methylthioribose-1-phosphate (MTR-1-P) into methylthioribulose-1-phosphate (MTRu-1-P). This Kluyveromyces lactis (strain ATCC 8585 / CBS 2359 / DSM 70799 / NBRC 1267 / NRRL Y-1140 / WM37) (Yeast) protein is Methylthioribose-1-phosphate isomerase.